Reading from the N-terminus, the 220-residue chain is UPF0319 protein YccT (220 aa).

An N-terminal signal peptide occupies residues 1–20 (MKTGALTTFLALCLPVTVFA).

This sequence belongs to the UPF0319 family.

This chain is UPF0319 protein YccT, found in Salmonella choleraesuis (strain SC-B67).